We begin with the raw amino-acid sequence, 129 residues long: Trefoil factor 2 (129 aa).

A signal peptide spans Met1 to Gly23. P-type domains follow at residues Cys29–Leu73 and Glu79–Gln122. 7 disulfides stabilise this stretch: Cys29–Cys127, Cys31–Cys58, Cys42–Cys57, Cys52–Cys69, Cys81–Cys107, Cys91–Cys106, and Cys101–Cys118.

Expressed in the digestive tract, where it was found predominantly in the stomach with highest expression in the antrum. It is secreted predominantly from antral mucous cells into the lumen of the gastrointestinal tract.

Its subcellular location is the secreted. Functionally, inhibits gastrointestinal motility and gastric acid secretion. Could function as a structural component of gastric mucus, possibly by stabilizing glycoproteins in the mucus gel through interactions with carbohydrate side chains. This is Trefoil factor 2 (Tff2) from Rattus norvegicus (Rat).